The following is a 314-amino-acid chain: Carbamate kinase (314 aa).

The protein belongs to the carbamate kinase family. As to quaternary structure, homodimer.

Its subcellular location is the cytoplasm. It catalyses the reaction hydrogencarbonate + NH4(+) + ATP = carbamoyl phosphate + ADP + H2O + H(+). Carbamate kinase that plays a biosynthetic role in that it produces carbamoyl-phosphate. The chain is Carbamate kinase (cpkA) from Pyrococcus furiosus (strain ATCC 43587 / DSM 3638 / JCM 8422 / Vc1).